A 165-amino-acid polypeptide reads, in one-letter code: Putative pre-16S rRNA nuclease (165 aa).

The protein belongs to the YqgF nuclease family.

Its subcellular location is the cytoplasm. Could be a nuclease involved in processing of the 5'-end of pre-16S rRNA. This is Putative pre-16S rRNA nuclease from Beijerinckia indica subsp. indica (strain ATCC 9039 / DSM 1715 / NCIMB 8712).